The primary structure comprises 213 residues: Probable GTP-binding protein EngB (213 aa).

Residues Glu-30–Leu-204 enclose the EngB-type G domain. GTP is bound by residues Gly-38–Ser-45, Gly-64–Leu-68, Asp-82–Gly-85, Thr-149–Asp-152, and Leu-182–Ala-185. The Mg(2+) site is built by Ser-45 and Thr-66.

This sequence belongs to the TRAFAC class TrmE-Era-EngA-EngB-Septin-like GTPase superfamily. EngB GTPase family. The cofactor is Mg(2+).

In terms of biological role, necessary for normal cell division and for the maintenance of normal septation. In Pseudomonas fluorescens (strain SBW25), this protein is Probable GTP-binding protein EngB.